Reading from the N-terminus, the 408-residue chain is Tryptophan synthase beta chain (408 aa).

At Lys90 the chain carries N6-(pyridoxal phosphate)lysine.

This sequence belongs to the TrpB family. As to quaternary structure, tetramer of two alpha and two beta chains. Pyridoxal 5'-phosphate serves as cofactor.

It carries out the reaction (1S,2R)-1-C-(indol-3-yl)glycerol 3-phosphate + L-serine = D-glyceraldehyde 3-phosphate + L-tryptophan + H2O. Its pathway is amino-acid biosynthesis; L-tryptophan biosynthesis; L-tryptophan from chorismate: step 5/5. The beta subunit is responsible for the synthesis of L-tryptophan from indole and L-serine. This chain is Tryptophan synthase beta chain, found in Bacillus licheniformis (strain ATCC 14580 / DSM 13 / JCM 2505 / CCUG 7422 / NBRC 12200 / NCIMB 9375 / NCTC 10341 / NRRL NRS-1264 / Gibson 46).